Reading from the N-terminus, the 480-residue chain is Cysteine--tRNA ligase (480 aa).

Cysteine 29 is a Zn(2+) binding site. A 'HIGH' region motif is present at residues proline 31–histidine 41. Zn(2+) contacts are provided by cysteine 220, histidine 245, and glutamate 249. The 'KMSKS' region signature appears at lysine 276 to serine 280. Lysine 279 lines the ATP pocket.

This sequence belongs to the class-I aminoacyl-tRNA synthetase family. Monomer. Zn(2+) serves as cofactor.

Its subcellular location is the cytoplasm. The catalysed reaction is tRNA(Cys) + L-cysteine + ATP = L-cysteinyl-tRNA(Cys) + AMP + diphosphate. The chain is Cysteine--tRNA ligase from Thermus thermophilus (strain ATCC BAA-163 / DSM 7039 / HB27).